A 609-amino-acid polypeptide reads, in one-letter code: UvrABC system protein C (609 aa).

A GIY-YIG domain is found at 13–91; that stretch reads HQPGVYRMFD…IKAFQPRYNV (79 aa). The UVR domain maps to 201–236; it reads QQVLEHLIKKMEQASMQLNFEQAAYFRDQIQAIRAV.

It belongs to the UvrC family. Interacts with UvrB in an incision complex.

The protein localises to the cytoplasm. The UvrABC repair system catalyzes the recognition and processing of DNA lesions. UvrC both incises the 5' and 3' sides of the lesion. The N-terminal half is responsible for the 3' incision and the C-terminal half is responsible for the 5' incision. This Histophilus somni (strain 2336) (Haemophilus somnus) protein is UvrABC system protein C.